The sequence spans 513 residues: Galactose-1-phosphate uridylyltransferase (513 aa).

It belongs to the galactose-1-phosphate uridylyltransferase type 2 family.

Its subcellular location is the cytoplasm. The enzyme catalyses alpha-D-galactose 1-phosphate + UDP-alpha-D-glucose = alpha-D-glucose 1-phosphate + UDP-alpha-D-galactose. It functions in the pathway carbohydrate metabolism; galactose metabolism. This is Galactose-1-phosphate uridylyltransferase (galT) from Bacillus subtilis (strain 168).